The chain runs to 247 residues: Cell division protein ZapD (247 aa).

The protein belongs to the ZapD family. As to quaternary structure, interacts with FtsZ.

Its subcellular location is the cytoplasm. Cell division factor that enhances FtsZ-ring assembly. Directly interacts with FtsZ and promotes bundling of FtsZ protofilaments, with a reduction in FtsZ GTPase activity. The protein is Cell division protein ZapD of Shigella dysenteriae serotype 1 (strain Sd197).